The sequence spans 519 residues: Membrane protein insertase YidC (519 aa).

Helical transmembrane passes span 6 to 26 (ILFVTLSAFTVFIWYFFFAQP), 298 to 318 (VDFGFFGFLGKIAFSILVFFY), 324 to 344 (YGWAIIMLTTIIQILVLPLTL), 390 to 410 (LGGCLPMLLQLPIFWAFFTML), 434 to 454 (FMQFGSFNLNLLPLMMGIGMF), and 471 to 491 (IMYIMPVIFTFMFWSFPSGLV).

This sequence belongs to the OXA1/ALB3/YidC family. Type 1 subfamily. In terms of assembly, interacts with the Sec translocase complex via SecD. Specifically interacts with transmembrane segments of nascent integral membrane proteins during membrane integration.

The protein localises to the cell inner membrane. Functionally, required for the insertion and/or proper folding and/or complex formation of integral membrane proteins into the membrane. Involved in integration of membrane proteins that insert both dependently and independently of the Sec translocase complex, as well as at least some lipoproteins. Aids folding of multispanning membrane proteins. This is Membrane protein insertase YidC from Endomicrobium trichonymphae.